The primary structure comprises 148 residues: Phospholipase A2-alpha (148 aa).

Residues Met-1–Ala-20 form the signal peptide. Cystine bridges form between Cys-38–Cys-66, Cys-42–Cys-72, Cys-47–Cys-122, Cys-59–Cys-79, Cys-78–Cys-105, and Cys-85–Cys-98. Tyr-58, Gly-60, and Tyr-63 together coordinate Ca(2+). Residue His-82 is part of the active site. Asp-83 is a binding site for Ca(2+).

The protein belongs to the phospholipase A2 family. Interacts with MYB30. The cofactor is Ca(2+). In terms of tissue distribution, ubiquitous but expressed at a low level.

The protein localises to the secreted. The protein resides in the golgi apparatus. Its subcellular location is the cytoplasmic vesicle. It localises to the nucleus. The catalysed reaction is a 1,2-diacyl-sn-glycero-3-phosphocholine + H2O = a 1-acyl-sn-glycero-3-phosphocholine + a fatty acid + H(+). PA2 catalyzes the calcium-dependent hydrolysis of the 2-acyl groups in 3-sn-phosphoglycerides. Releases lysophospholipids (LPLs) and free fatty acids (FFAs) from membrane phospholipids in response to hormones and other external stimuli. Modulates the trafficking of PIN proteins to the plasma membrane. Negatively regulates MYB30 transcriptional activity and hypersensitive response control. The chain is Phospholipase A2-alpha from Arabidopsis thaliana (Mouse-ear cress).